Consider the following 246-residue polypeptide: Cell division protein ZapD (246 aa).

The protein belongs to the ZapD family. In terms of assembly, interacts with FtsZ.

The protein resides in the cytoplasm. Cell division factor that enhances FtsZ-ring assembly. Directly interacts with FtsZ and promotes bundling of FtsZ protofilaments, with a reduction in FtsZ GTPase activity. The chain is Cell division protein ZapD from Vibrio atlanticus (strain LGP32) (Vibrio splendidus (strain Mel32)).